Reading from the N-terminus, the 308-residue chain is Urease accessory protein UreD (308 aa).

It belongs to the UreD family. As to quaternary structure, ureD, UreF and UreG form a complex that acts as a GTP-hydrolysis-dependent molecular chaperone, activating the urease apoprotein by helping to assemble the nickel containing metallocenter of UreC. The UreE protein probably delivers the nickel.

The protein resides in the cytoplasm. In terms of biological role, required for maturation of urease via the functional incorporation of the urease nickel metallocenter. This is Urease accessory protein UreD from Psychromonas ingrahamii (strain DSM 17664 / CCUG 51855 / 37).